Reading from the N-terminus, the 243-residue chain is Small ribosomal subunit protein uS3 (243 aa).

Residues 39–110 (IRKFIHKKYG…QVRINVVEVE (72 aa)) enclose the KH type-2 domain. Residues 217–243 (QQLPVGATPRRRAGRRPQQFEDRSNEG) are disordered. A compositionally biased stretch (basic and acidic residues) spans 234-243 (QQFEDRSNEG).

Belongs to the universal ribosomal protein uS3 family. As to quaternary structure, part of the 30S ribosomal subunit. Forms a tight complex with proteins S10 and S14.

Its function is as follows. Binds the lower part of the 30S subunit head. Binds mRNA in the 70S ribosome, positioning it for translation. The sequence is that of Small ribosomal subunit protein uS3 from Synechococcus sp. (strain WH7803).